Here is a 466-residue protein sequence, read N- to C-terminus: Proline--tRNA ligase (466 aa).

This sequence belongs to the class-II aminoacyl-tRNA synthetase family. ProS type 3 subfamily. As to quaternary structure, homodimer.

The protein localises to the cytoplasm. The enzyme catalyses tRNA(Pro) + L-proline + ATP = L-prolyl-tRNA(Pro) + AMP + diphosphate. In terms of biological role, catalyzes the attachment of proline to tRNA(Pro) in a two-step reaction: proline is first activated by ATP to form Pro-AMP and then transferred to the acceptor end of tRNA(Pro). This is Proline--tRNA ligase from Picrophilus torridus (strain ATCC 700027 / DSM 9790 / JCM 10055 / NBRC 100828 / KAW 2/3).